We begin with the raw amino-acid sequence, 313 residues long: Biotin synthase (313 aa).

In terms of domain architecture, Radical SAM core spans 28 to 258 (NFGNDIELCS…LFPQARLRLS (231 aa)). Residues cysteine 46, cysteine 50, and cysteine 53 each coordinate [4Fe-4S] cluster. 4 residues coordinate [2Fe-2S] cluster: cysteine 90, cysteine 121, cysteine 181, and arginine 256.

This sequence belongs to the radical SAM superfamily. Biotin synthase family. Homodimer. It depends on [4Fe-4S] cluster as a cofactor. [2Fe-2S] cluster is required as a cofactor.

It catalyses the reaction (4R,5S)-dethiobiotin + (sulfur carrier)-SH + 2 reduced [2Fe-2S]-[ferredoxin] + 2 S-adenosyl-L-methionine = (sulfur carrier)-H + biotin + 2 5'-deoxyadenosine + 2 L-methionine + 2 oxidized [2Fe-2S]-[ferredoxin]. It functions in the pathway cofactor biosynthesis; biotin biosynthesis; biotin from 7,8-diaminononanoate: step 2/2. Functionally, catalyzes the conversion of dethiobiotin (DTB) to biotin by the insertion of a sulfur atom into dethiobiotin via a radical-based mechanism. This chain is Biotin synthase, found in Francisella philomiragia subsp. philomiragia (strain ATCC 25017 / CCUG 19701 / FSC 153 / O#319-036).